The following is a 371-amino-acid chain: Opsin, ultraviolet-sensitive (371 aa).

The Extracellular portion of the chain corresponds to 1–52 (MSNDSIHWEARYLPAGPPRLLGWNVPAEELIHIPEHWLVYPEPNPSLHYLLA). Residue asparagine 3 is glycosylated (N-linked (GlcNAc...) asparagine). The helical transmembrane segment at 53–73 (LLYILFTFLALLGNGLVIWIF) threads the bilayer. At 74–84 (CAAKSLRTPSN) the chain is on the cytoplasmic side. Residues 85-105 (MFVVNLAICDFFMMIKTPIFI) form a helical membrane-spanning segment. Topologically, residues 106–121 (YNSFNTGFALGNLGCQ) are extracellular. Cysteines 120 and 197 form a disulfide. Residues 122-142 (IFAVIGSLTGIGAAITNAAIA) traverse the membrane as a helical segment. Over 143–161 (YDRYSTIARPLDGKLSRGQ) the chain is Cytoplasmic. The helical transmembrane segment at 162-182 (VILFIVLIWTYTIPWALMPVM) threads the bilayer. Topologically, residues 183 to 209 (GVWGRFVPEGFLTSCSFDYLTDTNEIR) are extracellular. A helical transmembrane segment spans residues 210 to 230 (IFVATIFTFSYCIPMILIIYY). At 231-278 (YSQIVSHVVNHEKALREQAKKMNVDSLRSNANTSSQSAEIRIAKAAIT) the chain is on the cytoplasmic side. Residues 279–299 (ICFLYVLSWTPYGVMSMIGAF) form a helical membrane-spanning segment. Residues 300 to 302 (GNK) are Extracellular-facing. A helical transmembrane segment spans residues 303–323 (ALLTPGVTMIPACTCKAVACL). The residue at position 318 (lysine 318) is an N6-(retinylidene)lysine. Residues 324 to 371 (DPYVYAISHPKYRLELQKRLPWLELQEKPISDSTSTTTETVNTPPASS) lie on the Cytoplasmic side of the membrane.

It belongs to the G-protein coupled receptor 1 family. Opsin subfamily. In terms of processing, phosphorylated on some or all of the serine and threonine residues present in the C-terminal region. In terms of tissue distribution, expressed in the dorsal region of the retina.

It is found in the membrane. Visual pigments are the light-absorbing molecules that mediate vision. They consist of an apoprotein, opsin, covalently linked to 11-cis-retinal. This chain is Opsin, ultraviolet-sensitive (UVOP), found in Apis mellifera (Honeybee).